A 209-amino-acid polypeptide reads, in one-letter code: Large ribosomal subunit protein eL13 (209 aa).

Belongs to the eukaryotic ribosomal protein eL13 family. In terms of assembly, component of the 60S large ribosomal subunit (LSU).

The protein localises to the cytoplasm. Its function is as follows. Component of the ribosome, a large ribonucleoprotein complex responsible for the synthesis of proteins in the cell. The small ribosomal subunit (SSU) binds messenger RNAs (mRNAs) and translates the encoded message by selecting cognate aminoacyl-transfer RNA (tRNA) molecules. The large subunit (LSU) contains the ribosomal catalytic site termed the peptidyl transferase center (PTC), which catalyzes the formation of peptide bonds, thereby polymerizing the amino acids delivered by tRNAs into a polypeptide chain. The nascent polypeptides leave the ribosome through a tunnel in the LSU and interact with protein factors that function in enzymatic processing, targeting, and the membrane insertion of nascent chains at the exit of the ribosomal tunnel. As part of the LSU, it is probably required for its formation and the maturation of rRNAs. This Dictyostelium discoideum (Social amoeba) protein is Large ribosomal subunit protein eL13 (rpl13).